The chain runs to 454 residues: Glutamate--tRNA ligase (454 aa).

Positions 7 to 17 (PSPTGCLHIGG) match the 'HIGH' region motif. The Zn(2+) site is built by C96, C98, C123, and D125. The 'KMSKS' region signature appears at 230 to 234 (RLSKR). K233 is an ATP binding site.

Belongs to the class-I aminoacyl-tRNA synthetase family. Glutamate--tRNA ligase type 1 subfamily. In terms of assembly, monomer. Zn(2+) is required as a cofactor.

The protein resides in the cytoplasm. It carries out the reaction tRNA(Glu) + L-glutamate + ATP = L-glutamyl-tRNA(Glu) + AMP + diphosphate. Its function is as follows. Catalyzes the attachment of glutamate to tRNA(Glu) in a two-step reaction: glutamate is first activated by ATP to form Glu-AMP and then transferred to the acceptor end of tRNA(Glu). In Ruthia magnifica subsp. Calyptogena magnifica, this protein is Glutamate--tRNA ligase.